The chain runs to 134 residues: Small ribosomal subunit protein uS11 (134 aa).

Positions 114–134 (DVTPVPSDSTRRKGGRRGRRL) are disordered. Residues 125–134 (RKGGRRGRRL) show a composition bias toward basic residues.

This sequence belongs to the universal ribosomal protein uS11 family.

The sequence is that of Small ribosomal subunit protein uS11 (RPS14) from Candida albicans (Yeast).